The primary structure comprises 177 residues: Large ribosomal subunit protein uL6 (177 aa).

The protein belongs to the universal ribosomal protein uL6 family. As to quaternary structure, part of the 50S ribosomal subunit.

Its function is as follows. This protein binds to the 23S rRNA, and is important in its secondary structure. It is located near the subunit interface in the base of the L7/L12 stalk, and near the tRNA binding site of the peptidyltransferase center. This is Large ribosomal subunit protein uL6 from Ruegeria pomeroyi (strain ATCC 700808 / DSM 15171 / DSS-3) (Silicibacter pomeroyi).